The following is a 227-amino-acid chain: Cytochrome c oxidase subunit 2 (227 aa).

At 1–14 (MAYPFQLGLQDATS) the chain is on the mitochondrial intermembrane side. The helical transmembrane segment at 15-45 (PIMEELTNFHDHTLMIVFLISSLVLYIISLM) threads the bilayer. Residues 46–59 (LTTKLTHTSTMDAQ) lie on the Mitochondrial matrix side of the membrane. A helical transmembrane segment spans residues 60–87 (EVETIWTILPAAILVLIALPSLRILYMM). At 88–227 (DEINNPVLTV…HFENWSASMV (140 aa)) the chain is on the mitochondrial intermembrane side. Cu cation is bound by residues His-161, Cys-196, Glu-198, Cys-200, His-204, and Met-207. Residue Glu-198 coordinates Mg(2+).

The protein belongs to the cytochrome c oxidase subunit 2 family. In terms of assembly, component of the cytochrome c oxidase (complex IV, CIV), a multisubunit enzyme composed of 14 subunits. The complex is composed of a catalytic core of 3 subunits MT-CO1, MT-CO2 and MT-CO3, encoded in the mitochondrial DNA, and 11 supernumerary subunits COX4I, COX5A, COX5B, COX6A, COX6B, COX6C, COX7A, COX7B, COX7C, COX8 and NDUFA4, which are encoded in the nuclear genome. The complex exists as a monomer or a dimer and forms supercomplexes (SCs) in the inner mitochondrial membrane with NADH-ubiquinone oxidoreductase (complex I, CI) and ubiquinol-cytochrome c oxidoreductase (cytochrome b-c1 complex, complex III, CIII), resulting in different assemblies (supercomplex SCI(1)III(2)IV(1) and megacomplex MCI(2)III(2)IV(2)). Found in a complex with TMEM177, COA6, COX18, COX20, SCO1 and SCO2. Interacts with TMEM177 in a COX20-dependent manner. Interacts with COX20. Interacts with COX16. Requires Cu cation as cofactor.

The protein localises to the mitochondrion inner membrane. The enzyme catalyses 4 Fe(II)-[cytochrome c] + O2 + 8 H(+)(in) = 4 Fe(III)-[cytochrome c] + 2 H2O + 4 H(+)(out). Functionally, component of the cytochrome c oxidase, the last enzyme in the mitochondrial electron transport chain which drives oxidative phosphorylation. The respiratory chain contains 3 multisubunit complexes succinate dehydrogenase (complex II, CII), ubiquinol-cytochrome c oxidoreductase (cytochrome b-c1 complex, complex III, CIII) and cytochrome c oxidase (complex IV, CIV), that cooperate to transfer electrons derived from NADH and succinate to molecular oxygen, creating an electrochemical gradient over the inner membrane that drives transmembrane transport and the ATP synthase. Cytochrome c oxidase is the component of the respiratory chain that catalyzes the reduction of oxygen to water. Electrons originating from reduced cytochrome c in the intermembrane space (IMS) are transferred via the dinuclear copper A center (CU(A)) of subunit 2 and heme A of subunit 1 to the active site in subunit 1, a binuclear center (BNC) formed by heme A3 and copper B (CU(B)). The BNC reduces molecular oxygen to 2 water molecules using 4 electrons from cytochrome c in the IMS and 4 protons from the mitochondrial matrix. This chain is Cytochrome c oxidase subunit 2 (MT-CO2), found in Uromys caudimaculatus (Giant white-tailed rat).